We begin with the raw amino-acid sequence, 273 residues long: Rhamnulose-1-phosphate aldolase (273 aa).

The active site involves glutamate 117. Positions 140, 142, and 211 each coordinate Zn(2+).

This sequence belongs to the aldolase class II family. RhaD subfamily. The cofactor is Zn(2+).

The protein resides in the cytoplasm. The catalysed reaction is L-rhamnulose 1-phosphate = (S)-lactaldehyde + dihydroxyacetone phosphate. The protein operates within carbohydrate degradation; L-rhamnose degradation; glycerone phosphate from L-rhamnose: step 3/3. In terms of biological role, catalyzes the reversible cleavage of L-rhamnulose-1-phosphate to dihydroxyacetone phosphate (DHAP) and L-lactaldehyde. This is Rhamnulose-1-phosphate aldolase from Listeria monocytogenes serotype 4b (strain CLIP80459).